A 429-amino-acid polypeptide reads, in one-letter code: Probable M18 family aminopeptidase 2 (429 aa).

Zn(2+) is bound by residues H82, H156, and H401.

This sequence belongs to the peptidase M18 family. Zn(2+) is required as a cofactor.

The protein is Probable M18 family aminopeptidase 2 of Stutzerimonas stutzeri (strain A1501) (Pseudomonas stutzeri).